A 396-amino-acid chain; its full sequence is MAKKIVSDLDLKGKTVIVRADFNVPLKDGEITNDNRIVQALPTIQYIIEQGGKIVLFSHLGKVKEESDKAKLTLRPVAEDLSKKLDKEVVFVPETRGEKLEAAIKDLKEGDVLLVENTRYEDLDGKKESKNDPELGKYWASLGDVFVNDAFGTAHREHASNVGISTHLETAAGFLMDKEIKFIGGVVNDPHKPVVAILGGAKVSDKINVIKNLVNIADKIIIGGGMAYTFLKAQGKEIGISLLEEDKIDFAKDLLEKHGDKIVLPVDTKVAKEFSNDAKITVVPSDSIPADQEGMDIGPNTVKLFADELEGAHTVVWNGPMGVFEFSNFAQGTIGVCKAIANLKDAITIIGGGDSAAAAISLGFENDFTHISTGGGASLEYLEGKELPGIKAINNK.

Residues 21-23 (DFN), R36, 59-62 (HLGK), R119, and R156 each bind substrate. Residues K206, G294, E325, and 352 to 355 (GGDS) each bind ATP.

This sequence belongs to the phosphoglycerate kinase family. Monomer.

It is found in the cytoplasm. It carries out the reaction (2R)-3-phosphoglycerate + ATP = (2R)-3-phospho-glyceroyl phosphate + ADP. It functions in the pathway carbohydrate degradation; glycolysis; pyruvate from D-glyceraldehyde 3-phosphate: step 2/5. This is Phosphoglycerate kinase from Staphylococcus aureus (strain bovine RF122 / ET3-1).